Here is a 322-residue protein sequence, read N- to C-terminus: MSKKKILITWPLPEAAMARARESYDVIAHGDDPKITIDEMIETAKSVDALLITLNEKCRKEVIDRIPENIKCISTYSIGFDHIDLDACKARGIKVGNAPHGVTVATAEIAMLLLLGSARRAGEGEKMIRTRSWPGWEPLELVGEKLDNKTLGIYGFGSIGQALAKRAQGFDMDIDYFDTHRASSSDEASYQATFHDSLDSLLSVSQFFSLNAPSTPETRYFFNKATIKSLPQGAIVVNTARGDLVDNELVVAALEAGRLAYAGFDVFAGEPNINEGYYDLPNTFLFPHIGSAATQAREDMAHQANDLIDALFGGADMSYALA.

Residues 158 to 159 (SI), D178, 239 to 241 (TAR), and D265 each bind NAD(+). R241 is a catalytic residue. Residue E270 is part of the active site. The active-site Proton donor is H288. 288 to 291 (HIGS) serves as a coordination point for NAD(+).

This sequence belongs to the D-isomer specific 2-hydroxyacid dehydrogenase family. As to quaternary structure, homodimer.

The enzyme catalyses (R)-glycerate + NAD(+) = 3-hydroxypyruvate + NADH + H(+). It functions in the pathway one-carbon metabolism; formaldehyde assimilation via serine pathway. Active on hydroxypyruvate and glyoxylate. The sequence is that of Glycerate dehydrogenase from Hyphomicrobium methylovorum.